Here is a 295-residue protein sequence, read N- to C-terminus: THO complex subunit 4C (295 aa).

Positions 1 to 67 (MSDALNMTLD…GPLAVNTRPS (67 aa)) are disordered. N-acetylserine is present on serine 2. Residues 11–22 (EIVKKSKSERSA) are compositionally biased toward basic and acidic residues. The segment covering 38–55 (GRGGPNGVVGGGRGGGPV) has biased composition (gly residues). In terms of domain architecture, RRM spans 107-184 (TTVYITNLDQ…RPMKLEILGG (78 aa)). Residues 212 to 295 (QGVRGGRVGR…SYHAEAMNIS (84 aa)) are disordered. 2 stretches are compositionally biased toward gly residues: residues 213-227 (GVRG…GSGP) and 242-267 (VTAG…SGGR). Positions 271–288 (KPVEKSAADLDKDLESYH) are enriched in basic and acidic residues.

It belongs to the ALYREF family. In terms of assembly, interacts with PARP1.

Its subcellular location is the nucleus. It localises to the nucleoplasm. The protein localises to the nucleolus. Functionally, export adapter involved in nuclear export of spliced and unspliced mRNA. The polypeptide is THO complex subunit 4C (Arabidopsis thaliana (Mouse-ear cress)).